The sequence spans 162 residues: Endoribonuclease YbeY (162 aa).

Zn(2+) contacts are provided by His126, His130, and His136.

The protein belongs to the endoribonuclease YbeY family. It depends on Zn(2+) as a cofactor.

The protein resides in the cytoplasm. Functionally, single strand-specific metallo-endoribonuclease involved in late-stage 70S ribosome quality control and in maturation of the 3' terminus of the 16S rRNA. This Fusobacterium nucleatum subsp. nucleatum (strain ATCC 25586 / DSM 15643 / BCRC 10681 / CIP 101130 / JCM 8532 / KCTC 2640 / LMG 13131 / VPI 4355) protein is Endoribonuclease YbeY.